We begin with the raw amino-acid sequence, 764 residues long: MLPFAPVEDPWDQEDMEVFGSTSSSEPQVVFTMKNAATVMREHERKEVNDLKMVDEPMEEGEPVSCRREELVKEVPITQHVKEGYEKADPAQFDLLKVLGQGSFGKVFLVRKKTGPDAGQLYAMKVLRKASLKVRDRVRTKMERDILVEVNHPFIVKLHYAFQTEGKLYLILDFLRGGDVFTRLSKEVLFTEEDVKFYLAELALALDHLHRLGIVYRDLKPENILLDEIGHIKLTDFGLSKESVDQEKKAYSFCGTVEYMAPEVVNRRAHSQSADWWSYGVLMFEMLTGTLPFQGKDRNETMNMILKAKLGMPQFLSAEAQSLLRMLFKRNPANRLGSEGVEEVKRHAFFASIDWNKLYKREVQPPFRPASGKPDDTFCFDPEFTAKTPKDSPGLPASANAHQLFKGFSFVATSIAEEYKITPVTSSNVLPIVQINGNAAQFSEAYELKEDIGIGSYSVCKRCIHSASNVEFAVKIIDKNKRDPSEEIEILMRYGQHPNIISLKEVFDDGKYVYLVTDLMKGGELLDRILKKKCFSEQEASNVLYVITKTVECLHSQGVVHRDLKPSNILYMDESAHPDSIKICDFGFAKQLRGENGLLLTPCYTANFVAPEVLTQQGYDAACDIWSLGVLLYTMLAGYTPFSNGPNDTPEEILLRIGNGRFSLSGGIWDNISRGAKDLLSHMLHMDPHQRYTAEQVLKHPWITQREQLPRHQPNSDEPPQEAVAAPYSVLARNPNRHHPILEPVTASRLAQRRNMKKRTSTGL.

Residues 1–24 (MLPFAPVEDPWDQEDMEVFGSTSS) are disordered. Residues 93-350 (FDLLKVLGQG…VEEVKRHAFF (258 aa)) enclose the Protein kinase 1 domain. Residues 99–107 (LGQGSFGKV) and Lys125 contribute to the ATP site. The active-site Proton acceptor is the Asp218. 3 positions are modified to phosphoserine: Ser252, Ser392, and Ser409. Residues 351 to 420 (ASIDWNKLYK…VATSIAEEYK (70 aa)) enclose the AGC-kinase C-terminal domain. One can recognise a Protein kinase 2 domain in the interval 446-706 (YELKEDIGIG…VLKHPWITQR (261 aa)). ATP contacts are provided by residues 452–460 (IGIGSYSVC) and Lys475. Asp563 functions as the Proton acceptor in the catalytic mechanism. The residue at position 601 (Thr601) is a Phosphothreonine.

This sequence belongs to the protein kinase superfamily. AGC Ser/Thr protein kinase family. S6 kinase subfamily. Forms a complex with MAPK3/ERK1 but not with MAPK9 or MAPK14 in serum-starved cells. The cofactor is Mg(2+). In terms of processing, phosphorylated at Ser-252, Ser-392, and Ser-409 in serum-starved cells.

The protein resides in the cytoplasm. It is found in the cytosol. It localises to the nucleus. The enzyme catalyses L-seryl-[protein] + ATP = O-phospho-L-seryl-[protein] + ADP + H(+). The catalysed reaction is L-threonyl-[protein] + ATP = O-phospho-L-threonyl-[protein] + ADP + H(+). Constitutively activated by phosphorylation at Ser-252, Ser-392, and Ser-409 in serum-starved cells. Does not require growth factor stimulation for significant kinase activity. Its function is as follows. Constitutively active serine/threonine-protein kinase that exhibits growth-factor-independent kinase activity and that may participate in p53/TP53-dependent cell growth arrest signaling and play an inhibitory role during embryogenesis. The polypeptide is Ribosomal protein S6 kinase alpha-6 (Rps6ka6) (Mus musculus (Mouse)).